Reading from the N-terminus, the 128-residue chain is Holin-like protein CidA (128 aa).

The next 4 helical transmembrane spans lie at 4 to 24 (LLLT…INWV), 27 to 46 (ALHI…FTLL), 59 to 79 (GAAW…VGVI), and 88 to 108 (FGVS…VSTG).

This sequence belongs to the CidA/LrgA family. CidA subfamily.

It localises to the cell membrane. Its function is as follows. Increases the activity of extracellular murein hydrolases possibly by mediating their export via hole formation. Inhibited by the antiholin-like proteins LrgAB. In an unstressed cell, the LrgAB products probably inhibit the function of the CidA protein. When a cell is stressed by the addition of antibiotics or by other factors in the environment, CidA possibly oligomerizes within the bacterial cell membrane, creating lesions that disrupt the proton motive force, which in turn results in loss of cell viability. These lesions are also hypothesized to regulate the subsequent cell lysis by either allowing the murein hydrolases access to the cell wall substrate and/or regulating their activity by a possible change in the cell wall pH that results from loss of membrane potential. This Bacillus velezensis (strain DSM 23117 / BGSC 10A6 / LMG 26770 / FZB42) (Bacillus amyloliquefaciens subsp. plantarum) protein is Holin-like protein CidA.